Here is a 31-residue protein sequence, read N- to C-terminus: Cytochrome b6-f complex subunit 6 (31 aa).

A helical membrane pass occupies residues 4–24; the sequence is LTSYFGFLLAALTITLALFIG.

This sequence belongs to the PetL family. The 4 large subunits of the cytochrome b6-f complex are cytochrome b6, subunit IV (17 kDa polypeptide, PetD), cytochrome f and the Rieske protein, while the 4 small subunits are PetG, PetL, PetM and PetN. The complex functions as a dimer.

The protein localises to the plastid. It is found in the chloroplast thylakoid membrane. Component of the cytochrome b6-f complex, which mediates electron transfer between photosystem II (PSII) and photosystem I (PSI), cyclic electron flow around PSI, and state transitions. PetL is important for photoautotrophic growth as well as for electron transfer efficiency and stability of the cytochrome b6-f complex. The polypeptide is Cytochrome b6-f complex subunit 6 (Triticum aestivum (Wheat)).